The chain runs to 332 residues: UPF0194 membrane protein YbhG (332 aa).

Positions 1-16 (MMKKPVVIGLAVVVLA) are cleaved as a signal peptide. The stretch at 108 to 209 (EEIAQAAAAV…LNLQDSTLIA (102 aa)) forms a coiled coil.

Belongs to the UPF0194 family.

Its subcellular location is the periplasm. The protein is UPF0194 membrane protein YbhG of Escherichia coli O45:K1 (strain S88 / ExPEC).